The chain runs to 301 residues: Acetylglutamate kinase (301 aa).

Residues 68 to 69 (GG), Arg90, and Asn195 contribute to the substrate site.

Belongs to the acetylglutamate kinase family. ArgB subfamily.

Its subcellular location is the cytoplasm. The enzyme catalyses N-acetyl-L-glutamate + ATP = N-acetyl-L-glutamyl 5-phosphate + ADP. The protein operates within amino-acid biosynthesis; L-arginine biosynthesis; N(2)-acetyl-L-ornithine from L-glutamate: step 2/4. Functionally, catalyzes the ATP-dependent phosphorylation of N-acetyl-L-glutamate. The chain is Acetylglutamate kinase from Pseudomonas fluorescens (strain SBW25).